Here is a 374-residue protein sequence, read N- to C-terminus: GPN-loop GTPase 1 (374 aa).

The residue at position 2 (Ala2) is an N-acetylalanine. GTP is bound at residue 29–34 (GSGKTT). Residues 86-88 (GPN) carry the Gly-Pro-Asn (GPN)-loop; involved in dimer interface motif. 189 to 192 (NKTD) lines the GTP pocket. Residues Ser301, Ser312, and Ser314 each carry the phosphoserine modification. The segment at 326–354 (RGTLDEEDEEADSDTDDIDHRVTEESHEE) is disordered. Thr328 is modified (phosphothreonine). Over residues 330–342 (DEEDEEADSDTDD) the composition is skewed to acidic residues. Phosphoserine is present on Ser338. Thr340 carries the phosphothreonine modification. Over residues 343-354 (IDHRVTEESHEE) the composition is skewed to basic and acidic residues.

The protein belongs to the GPN-loop GTPase family. As to quaternary structure, heterodimer with GPN3. Binds to RNA polymerase II (RNAPII). Interacts directly with RNAPII subunits RPB4 and RPB7 and the CTD of RPB1. Interacts with XPA. As to expression, expressed ubiquitously.

It localises to the cytoplasm. The protein localises to the nucleus. Functionally, small GTPase required for proper nuclear import of RNA polymerase II (RNAPII). May act at an RNAP assembly step prior to nuclear import. Forms an interface between the RNA polymerase II enzyme and chaperone/scaffolding proteins, suggesting that it is required to connect RNA polymerase II to regulators of protein complex formation. May be involved in nuclear localization of XPA. The sequence is that of GPN-loop GTPase 1 from Homo sapiens (Human).